A 303-amino-acid polypeptide reads, in one-letter code: Nucleotide-binding protein SAR0820 (303 aa).

18 to 25 (GLSGAGKS) contributes to the ATP binding site. Residue 69-72 (DLRG) participates in GTP binding.

This sequence belongs to the RapZ-like family.

In terms of biological role, displays ATPase and GTPase activities. The polypeptide is Nucleotide-binding protein SAR0820 (Staphylococcus aureus (strain MRSA252)).